The primary structure comprises 239 residues: Ribonuclease 3 (239 aa).

The region spanning 12 to 137 is the RNase III domain; the sequence is RARLETAIGY…LIAAIYLDGG (126 aa). E50 is a binding site for Mg(2+). The active site involves D54. Mg(2+) is bound by residues D123 and E126. E126 is an active-site residue. The DRBM domain maps to 162–231; that stretch reads DAKTELQEWA…AMRLLEREGV (70 aa).

This sequence belongs to the ribonuclease III family. In terms of assembly, homodimer. Mg(2+) is required as a cofactor.

Its subcellular location is the cytoplasm. The enzyme catalyses Endonucleolytic cleavage to 5'-phosphomonoester.. Digests double-stranded RNA. Involved in the processing of primary rRNA transcript to yield the immediate precursors to the large and small rRNAs (23S and 16S). Processes some mRNAs, and tRNAs when they are encoded in the rRNA operon. Processes pre-crRNA and tracrRNA of type II CRISPR loci if present in the organism. The polypeptide is Ribonuclease 3 (Sinorhizobium fredii (strain NBRC 101917 / NGR234)).